The following is a 45-amino-acid chain: Photosystem II reaction center protein K (45 aa).

A propeptide spanning residues 1–8 is cleaved from the precursor; sequence MITAIIIA. A helical membrane pass occupies residues 23 to 43; sequence ILPVIPIFFLLLAFVWQAAIG.

Belongs to the PsbK family. As to quaternary structure, PSII is composed of 1 copy each of membrane proteins PsbA, PsbB, PsbC, PsbD, PsbE, PsbF, PsbH, PsbI, PsbJ, PsbK, PsbL, PsbM, PsbT, PsbX, PsbY, PsbZ, Psb30/Ycf12, at least 3 peripheral proteins of the oxygen-evolving complex and a large number of cofactors. It forms dimeric complexes.

The protein resides in the plastid. It localises to the chloroplast thylakoid membrane. Its function is as follows. One of the components of the core complex of photosystem II (PSII). PSII is a light-driven water:plastoquinone oxidoreductase that uses light energy to abstract electrons from H(2)O, generating O(2) and a proton gradient subsequently used for ATP formation. It consists of a core antenna complex that captures photons, and an electron transfer chain that converts photonic excitation into a charge separation. This is Photosystem II reaction center protein K from Gracilaria tenuistipitata var. liui (Red alga).